The chain runs to 585 residues: Glutamate decarboxylase (585 aa).

Residues 35–56 show a composition bias toward polar residues; the sequence is KSAVQSGHQGSNNMRDTSSQGM. The segment at 35–60 is disordered; the sequence is KSAVQSGHQGSNNMRDTSSQGMANKY. Position 318 is an N6-(pyridoxal phosphate)lysine (Lys318).

The protein belongs to the group II decarboxylase family. It depends on pyridoxal 5'-phosphate as a cofactor.

The enzyme catalyses L-glutamate + H(+) = 4-aminobutanoate + CO2. This chain is Glutamate decarboxylase (GAD1), found in Saccharomyces cerevisiae (strain ATCC 204508 / S288c) (Baker's yeast).